Consider the following 181-residue polypeptide: Oligoribonuclease (181 aa).

The Exonuclease domain occupies 8–171; it reads LIWIDLEMTG…DDIRESVAEL (164 aa). Y129 is a catalytic residue.

This sequence belongs to the oligoribonuclease family. Homodimer.

It localises to the cytoplasm. 3'-to-5' exoribonuclease specific for small oligoribonucleotides. The sequence is that of Oligoribonuclease from Escherichia coli O157:H7.